The primary structure comprises 455 residues: Glutamyl-tRNA reductase (455 aa).

Substrate is bound by residues 49–52 (TCNR), Ser-109, 114–116 (EAQ), and Gln-120. Cys-50 functions as the Nucleophile in the catalytic mechanism. Residue 190 to 195 (GAGAMG) coordinates NADP(+).

It belongs to the glutamyl-tRNA reductase family. In terms of assembly, homodimer.

The catalysed reaction is (S)-4-amino-5-oxopentanoate + tRNA(Glu) + NADP(+) = L-glutamyl-tRNA(Glu) + NADPH + H(+). It functions in the pathway porphyrin-containing compound metabolism; protoporphyrin-IX biosynthesis; 5-aminolevulinate from L-glutamyl-tRNA(Glu): step 1/2. In terms of biological role, catalyzes the NADPH-dependent reduction of glutamyl-tRNA(Glu) to glutamate 1-semialdehyde (GSA). This Salinispora arenicola (strain CNS-205) protein is Glutamyl-tRNA reductase.